Reading from the N-terminus, the 189-residue chain is Glycerol-3-phosphate acyltransferase (189 aa).

Transmembrane regions (helical) follow at residues 1 to 21 (MFWL…AIVL), 50 to 70 (KLAI…VLLA), 77 to 97 (LHAQ…PLYF), 111 to 131 (MLMG…LLTF), and 151 to 171 (LLAW…VMIV).

The protein belongs to the PlsY family. As to quaternary structure, probably interacts with PlsX.

The protein localises to the cell inner membrane. The enzyme catalyses an acyl phosphate + sn-glycerol 3-phosphate = a 1-acyl-sn-glycero-3-phosphate + phosphate. It functions in the pathway lipid metabolism; phospholipid metabolism. Catalyzes the transfer of an acyl group from acyl-phosphate (acyl-PO(4)) to glycerol-3-phosphate (G3P) to form lysophosphatidic acid (LPA). This enzyme utilizes acyl-phosphate as fatty acyl donor, but not acyl-CoA or acyl-ACP. This is Glycerol-3-phosphate acyltransferase from Pseudomonas putida (strain ATCC 700007 / DSM 6899 / JCM 31910 / BCRC 17059 / LMG 24140 / F1).